The following is an 85-amino-acid chain: Large ribosomal subunit protein bL27 (85 aa).

Positions 1 to 20 (MATKKAGGSTRNGRDSEAKR) are disordered.

The protein belongs to the bacterial ribosomal protein bL27 family.

This chain is Large ribosomal subunit protein bL27, found in Haemophilus influenzae (strain ATCC 51907 / DSM 11121 / KW20 / Rd).